We begin with the raw amino-acid sequence, 156 residues long: 6,7-dimethyl-8-ribityllumazine synthase (156 aa).

Residues Phe23, 57–59 (AYE), and 81–83 (AII) each bind 5-amino-6-(D-ribitylamino)uracil. 86–87 (GT) provides a ligand contact to (2S)-2-hydroxy-3-oxobutyl phosphate. His89 serves as the catalytic Proton donor. Phe114 provides a ligand contact to 5-amino-6-(D-ribitylamino)uracil. Arg128 is a (2S)-2-hydroxy-3-oxobutyl phosphate binding site.

This sequence belongs to the DMRL synthase family.

The catalysed reaction is (2S)-2-hydroxy-3-oxobutyl phosphate + 5-amino-6-(D-ribitylamino)uracil = 6,7-dimethyl-8-(1-D-ribityl)lumazine + phosphate + 2 H2O + H(+). It functions in the pathway cofactor biosynthesis; riboflavin biosynthesis; riboflavin from 2-hydroxy-3-oxobutyl phosphate and 5-amino-6-(D-ribitylamino)uracil: step 1/2. Functionally, catalyzes the formation of 6,7-dimethyl-8-ribityllumazine by condensation of 5-amino-6-(D-ribitylamino)uracil with 3,4-dihydroxy-2-butanone 4-phosphate. This is the penultimate step in the biosynthesis of riboflavin. This chain is 6,7-dimethyl-8-ribityllumazine synthase, found in Helicobacter acinonychis (strain Sheeba).